The chain runs to 505 residues: Glycerol kinase (505 aa).

Threonine 12 is a binding site for ADP. Threonine 12, threonine 13, and serine 14 together coordinate ATP. Threonine 12 serves as a coordination point for sn-glycerol 3-phosphate. Arginine 16 lines the ADP pocket. 4 residues coordinate sn-glycerol 3-phosphate: arginine 82, glutamate 83, tyrosine 134, and aspartate 246. Positions 82, 83, 134, 246, and 247 each coordinate glycerol. Residues threonine 268 and glycine 312 each contribute to the ADP site. ATP-binding residues include threonine 268, glycine 312, glutamine 316, and glycine 413. Glycine 413 and asparagine 417 together coordinate ADP.

This sequence belongs to the FGGY kinase family.

It catalyses the reaction glycerol + ATP = sn-glycerol 3-phosphate + ADP + H(+). It participates in polyol metabolism; glycerol degradation via glycerol kinase pathway; sn-glycerol 3-phosphate from glycerol: step 1/1. Inhibited by fructose 1,6-bisphosphate (FBP). Its function is as follows. Key enzyme in the regulation of glycerol uptake and metabolism. Catalyzes the phosphorylation of glycerol to yield sn-glycerol 3-phosphate. This is Glycerol kinase from Beutenbergia cavernae (strain ATCC BAA-8 / DSM 12333 / CCUG 43141 / JCM 11478 / NBRC 16432 / NCIMB 13614 / HKI 0122).